Consider the following 644-residue polypeptide: 1-deoxy-D-xylulose-5-phosphate synthase (644 aa).

Residues His-72 and 113-115 (GHA) contribute to the thiamine diphosphate site. Residue Asp-144 coordinates Mg(2+). Residues 145–146 (GA), Asn-174, Tyr-287, and Glu-370 contribute to the thiamine diphosphate site. Asn-174 provides a ligand contact to Mg(2+).

It belongs to the transketolase family. DXPS subfamily. In terms of assembly, homodimer. Mg(2+) is required as a cofactor. Thiamine diphosphate serves as cofactor.

It carries out the reaction D-glyceraldehyde 3-phosphate + pyruvate + H(+) = 1-deoxy-D-xylulose 5-phosphate + CO2. It functions in the pathway metabolic intermediate biosynthesis; 1-deoxy-D-xylulose 5-phosphate biosynthesis; 1-deoxy-D-xylulose 5-phosphate from D-glyceraldehyde 3-phosphate and pyruvate: step 1/1. Catalyzes the acyloin condensation reaction between C atoms 2 and 3 of pyruvate and glyceraldehyde 3-phosphate to yield 1-deoxy-D-xylulose-5-phosphate (DXP). The chain is 1-deoxy-D-xylulose-5-phosphate synthase from Prochlorococcus marinus (strain MIT 9303).